Reading from the N-terminus, the 376-residue chain is Histidinol dehydrogenase (376 aa).

NAD(+) is bound by residues tyrosine 100 and asparagine 182. Substrate-binding residues include serine 205, glutamine 227, and histidine 230. The Zn(2+) site is built by glutamine 227 and histidine 230. Catalysis depends on proton acceptor residues glutamate 275 and histidine 276. Histidine 276, aspartate 309, glutamate 363, and histidine 368 together coordinate substrate. Aspartate 309 contributes to the Zn(2+) binding site. Histidine 368 provides a ligand contact to Zn(2+).

The protein belongs to the histidinol dehydrogenase family. Requires Zn(2+) as cofactor.

The catalysed reaction is L-histidinol + 2 NAD(+) + H2O = L-histidine + 2 NADH + 3 H(+). The protein operates within amino-acid biosynthesis; L-histidine biosynthesis; L-histidine from 5-phospho-alpha-D-ribose 1-diphosphate: step 9/9. Catalyzes the sequential NAD-dependent oxidations of L-histidinol to L-histidinaldehyde and then to L-histidine. The sequence is that of Histidinol dehydrogenase from Thermococcus kodakarensis (strain ATCC BAA-918 / JCM 12380 / KOD1) (Pyrococcus kodakaraensis (strain KOD1)).